The chain runs to 251 residues: Seminal metalloprotease 1 (251 aa).

Positions 1 to 18 (MFPQIWGVIFLFTPTVFS) are cleaved as a signal peptide. Positions 44-248 (NGIVNQIYHW…RKLNKMYRCP (205 aa)) constitute a Peptidase M12A domain. 2 N-linked (GlcNAc...) asparagine glycosylation sites follow: asparagine 55 and asparagine 120. 2 cysteine pairs are disulfide-bonded: cysteine 87/cysteine 247 and cysteine 111/cysteine 136. A Zn(2+)-binding site is contributed by histidine 144. Glutamate 145 is an active-site residue. Residues histidine 148 and histidine 154 each coordinate Zn(2+). Asparagine 185 carries an N-linked (GlcNAc...) asparagine glycan.

The cofactor is Zn(2+). Post-translationally, undergoes cleavage in the male during mating with a cleaved product detected in the ejaculatory duct and/or bulb of males by 8-10 minutes after the start of mating. Further cleavage occurs in the mated female. May undergo cleavage in a two-step process where it is first cleaved by Sems, making it susceptible to activational cleavage which may be carried out by another protease or by autocleavage. As to expression, produced in the male accessory glands and secreted into seminal fluid. In mated females, confined to the reproductive tract and also detected in eggs laid by mated females (at protein level).

The protein localises to the secreted. Functionally, seminal fluid metalloprotease which is transferred to females during mating and is required for processing of two other seminal fluid proteins Acp26Aa and Acp36DE in mated females. The sequence is that of Seminal metalloprotease 1 from Drosophila melanogaster (Fruit fly).